Reading from the N-terminus, the 88-residue chain is ATP synthase subunit c 2 (88 aa).

A run of 2 helical transmembrane segments spans residues 4-24 and 53-73; these read FSWV…GTGI and IGLA…MIIL.

The protein belongs to the ATPase C chain family. In terms of assembly, F-type ATPases have 2 components, F(1) - the catalytic core - and F(0) - the membrane proton channel. F(1) has five subunits: alpha(3), beta(3), gamma(1), delta(1), epsilon(1). F(0) has three main subunits: a(1), b(2) and c(10-14). The alpha and beta chains form an alternating ring which encloses part of the gamma chain. F(1) is attached to F(0) by a central stalk formed by the gamma and epsilon chains, while a peripheral stalk is formed by the delta and b chains.

It is found in the cell inner membrane. In terms of biological role, f(1)F(0) ATP synthase produces ATP from ADP in the presence of a proton or sodium gradient. F-type ATPases consist of two structural domains, F(1) containing the extramembraneous catalytic core and F(0) containing the membrane proton channel, linked together by a central stalk and a peripheral stalk. During catalysis, ATP synthesis in the catalytic domain of F(1) is coupled via a rotary mechanism of the central stalk subunits to proton translocation. Key component of the F(0) channel; it plays a direct role in translocation across the membrane. A homomeric c-ring of between 10-14 subunits forms the central stalk rotor element with the F(1) delta and epsilon subunits. This chain is ATP synthase subunit c 2, found in Syntrophotalea carbinolica (strain DSM 2380 / NBRC 103641 / GraBd1) (Pelobacter carbinolicus).